A 147-amino-acid chain; its full sequence is Small ribosomal subunit protein uS12 (147 aa).

Belongs to the universal ribosomal protein uS12 family. As to quaternary structure, part of the 30S ribosomal subunit.

Functionally, with S4 and S5 plays an important role in translational accuracy. Located at the interface of the 30S and 50S subunits. The protein is Small ribosomal subunit protein uS12 of Methanococcus aeolicus (strain ATCC BAA-1280 / DSM 17508 / OCM 812 / Nankai-3).